The chain runs to 87 residues: Elastase inhibitor AFLEI (87 aa).

Positions Met-1–Ala-19 are cleaved as a signal peptide. Cysteines 24 and 86 form a disulfide.

It localises to the secreted. Elastase inhibitor. This chain is Elastase inhibitor AFLEI, found in Aspergillus fumigatus (strain CBS 144.89 / FGSC A1163 / CEA10) (Neosartorya fumigata).